The following is a 220-amino-acid chain: MNGFTPDEMSRGGDAAAAVAAVVAAAAAAASAGNGTGAGTGAEVPGAGAVSAAGPPGAAGPGPGQLCCLREDGERCGRAAGNASFSKRIQKSISQKKVKIELDKSARHLYICDYHKNLIQSVRNRRKRKGSDDDGGDSPVQDIDTPEVDLYQLQVNTLRRYKRHFKLPTRPGLNKAQLVEIVGCHFRSIPVNEKDTLTYFIYSVKNDKNKSDLKVDSGVH.

Residues 1–129 form an interaction with NCOR1 region; it reads MNGFTPDEMS…QSVRNRRKRK (129 aa). Thr-5 is subject to Phosphothreonine. The segment at 67-115 adopts an Atypical zinc-finger fold; the sequence is CCLREDGERCGRAAGNASFSKRIQKSISQKKVKIELDKSARHLYICDYH. Residue Lys-87 forms a Glycyl lysine isopeptide (Lys-Gly) (interchain with G-Cter in SUMO2) linkage. Residues 123 to 143 are disordered; sequence RNRRKRKGSDDDGGDSPVQDI. The tract at residues 130–220 is interaction with SIN3A; that stretch reads GSDDDGGDSP…SDLKVDSGVH (91 aa). A phosphoserine mark is found at Ser-131 and Ser-138. A Phosphothreonine modification is found at Thr-145. Residues Lys-194, Lys-205, and Lys-214 each participate in a glycyl lysine isopeptide (Lys-Gly) (interchain with G-Cter in SUMO2) cross-link.

This sequence belongs to the SAP30 family. In terms of assembly, component of the histone deacetylase complex that includes at least SIN3A, HDAC1 and HDAC2. Found in a complex composed of at least SINHCAF, SIN3A, HDAC1, SAP30, RBBP4, OGT and TET1. Interacts with HDAC1. Interacts with SIN3A, SIN3B, HDAC2, RBBP4 and NCOR1. Interacts with SAMSN1. Interacts with HCFC1. Interacts with SAP30BP. In terms of tissue distribution, expressed in all tissues tested with highest levels in pancreas, ovary, PBL, spleen and thymus; lowest levels in brain, placenta, lung and kidney.

The protein localises to the nucleus. In terms of biological role, involved in the functional recruitment of the Sin3-histone deacetylase complex (HDAC) to a specific subset of N-CoR corepressor complexes. Capable of transcription repression by N-CoR. Active in deacetylating core histone octamers (when in a complex) but inactive in deacetylating nucleosomal histones. Its function is as follows. (Microbial infection) Involved in transcriptional repression of HHV-1 genes TK and gC. This chain is Histone deacetylase complex subunit SAP30, found in Homo sapiens (Human).